The following is a 212-amino-acid chain: Adenylate kinase (212 aa).

10–15 (GAGKGT) provides a ligand contact to ATP. The tract at residues 30–59 (STGDMFRAAMANQTEMGRLAKSYIDKGELV) is NMP. AMP-binding positions include T31, R36, 57–59 (ELV), 86–89 (GYPR), and Q93. The tract at residues 127–159 (GRIINRKTGETFHKVFNPPVDYKEEDYYQREDD) is LID. Residues R128 and 137–138 (TF) contribute to the ATP site. Positions 156 and 167 each coordinate AMP. Residue Q195 participates in ATP binding.

This sequence belongs to the adenylate kinase family. Monomer.

It localises to the cytoplasm. The catalysed reaction is AMP + ATP = 2 ADP. The protein operates within purine metabolism; AMP biosynthesis via salvage pathway; AMP from ADP: step 1/1. Catalyzes the reversible transfer of the terminal phosphate group between ATP and AMP. Plays an important role in cellular energy homeostasis and in adenine nucleotide metabolism. The sequence is that of Adenylate kinase from Streptococcus agalactiae serotype Ia (strain ATCC 27591 / A909 / CDC SS700).